The primary structure comprises 107 residues: U1-lycotoxin-Ls1w (107 aa).

The signal sequence occupies residues 1-20; that stretch reads MLKVLVVVALLVTLISYSSS. A propeptide spanning residues 21–41 is cleaved from the precursor; it reads EGIDDLEADELLSLMANEQTR. 4 disulfides stabilise this stretch: C44-C59, C51-C68, C58-C86, and C70-C84.

Belongs to the neurotoxin 19 (CSTX) family. 04 (U1-Lctx) subfamily. As to expression, expressed by the venom gland.

The protein localises to the secreted. In Lycosa singoriensis (Wolf spider), this protein is U1-lycotoxin-Ls1w.